The chain runs to 667 residues: DNA ligase (667 aa).

Residues 34-38, 83-84, and Glu-113 contribute to the NAD(+) site; these read DAEYD and SL. Lys-115 (N6-AMP-lysine intermediate) is an active-site residue. Residues Arg-136, Glu-170, Lys-286, and Lys-310 each coordinate NAD(+). Zn(2+) is bound by residues Cys-404, Cys-407, Cys-422, and Cys-427. The BRCT domain occupies 589–667; it reads ATDSVLSGKT…EQQLEDVVGK (79 aa).

Belongs to the NAD-dependent DNA ligase family. LigA subfamily. The cofactor is Mg(2+). It depends on Mn(2+) as a cofactor.

It catalyses the reaction NAD(+) + (deoxyribonucleotide)n-3'-hydroxyl + 5'-phospho-(deoxyribonucleotide)m = (deoxyribonucleotide)n+m + AMP + beta-nicotinamide D-nucleotide.. DNA ligase that catalyzes the formation of phosphodiester linkages between 5'-phosphoryl and 3'-hydroxyl groups in double-stranded DNA using NAD as a coenzyme and as the energy source for the reaction. It is essential for DNA replication and repair of damaged DNA. The protein is DNA ligase of Oceanobacillus iheyensis (strain DSM 14371 / CIP 107618 / JCM 11309 / KCTC 3954 / HTE831).